A 283-amino-acid polypeptide reads, in one-letter code: MEMO1 family protein MK0963 (283 aa).

This sequence belongs to the MEMO1 family.

The sequence is that of MEMO1 family protein MK0963 from Methanopyrus kandleri (strain AV19 / DSM 6324 / JCM 9639 / NBRC 100938).